A 93-amino-acid polypeptide reads, in one-letter code: MQPLGERIVVQREESETTTAGGIVLPDSAKEKPARGTVVALGTGKLLDDGSRADFQLAAGDRVLFSSYAGETVEVDDTEYLLMREDDVLAVIE.

Residues 1–20 (MQPLGERIVVQREESETTTA) form a disordered region.

It belongs to the GroES chaperonin family. Heptamer of 7 subunits arranged in a ring. Interacts with the chaperonin GroEL.

Its subcellular location is the cytoplasm. In terms of biological role, together with the chaperonin GroEL, plays an essential role in assisting protein folding. The GroEL-GroES system forms a nano-cage that allows encapsulation of the non-native substrate proteins and provides a physical environment optimized to promote and accelerate protein folding. GroES binds to the apical surface of the GroEL ring, thereby capping the opening of the GroEL channel. This chain is Co-chaperonin GroES 2, found in Rhodopirellula baltica (strain DSM 10527 / NCIMB 13988 / SH1).